Reading from the N-terminus, the 782-residue chain is Endonuclease MutS2 (782 aa).

336-343 (GPNTGGKT) is an ATP binding site. The Smr domain occupies 707-782 (LDLRGYRYEE…GFGVTVAELK (76 aa)).

Belongs to the DNA mismatch repair MutS family. MutS2 subfamily. As to quaternary structure, homodimer. Binds to stalled ribosomes, contacting rRNA.

Functionally, endonuclease that is involved in the suppression of homologous recombination and thus may have a key role in the control of bacterial genetic diversity. Its function is as follows. Acts as a ribosome collision sensor, splitting the ribosome into its 2 subunits. Detects stalled/collided 70S ribosomes which it binds and splits by an ATP-hydrolysis driven conformational change. Acts upstream of the ribosome quality control system (RQC), a ribosome-associated complex that mediates the extraction of incompletely synthesized nascent chains from stalled ribosomes and their subsequent degradation. Probably generates substrates for RQC. The protein is Endonuclease MutS2 of Staphylococcus carnosus (strain TM300).